The primary structure comprises 473 residues: Histone-lysine N-methyltransferase ATXR2 (473 aa).

The region spanning 33–441 (KLITSRRCNG…KNEEVTISYI (409 aa)) is the SET domain. An MYND-type; degenerate zinc finger spans residues 134–203 (EEQCGGSSSS…DWESSHSLLC (70 aa)). Zn(2+) is bound by residues cysteine 176, cysteine 180, histidine 199, and cysteine 203. Tyrosine 440 contacts S-adenosyl-L-methionine.

This sequence belongs to the class V-like SAM-binding methyltransferase superfamily. Histone-lysine methyltransferase family. TRX/MLL subfamily. Interacts with JMJ30. Binds to ARF7 and ARF19 in the nucleus.

It localises to the nucleus. It catalyses the reaction L-lysyl-[histone] + S-adenosyl-L-methionine = N(6)-methyl-L-lysyl-[histone] + S-adenosyl-L-homocysteine + H(+). Functionally, histone methyltransferase that methylates 'Lys-36' (H3K36me) of histone H3 to produce H3K36me3. Promotes early stages of cellular dedifferentiation through H3K36me3-dependent, and to a lesser degree H3K4me3-dependent, activation of Lateral organ Boundaries-Domain (LBD) (e.g. LBD16 and LBD29) genes. Positive regulator of root organogenesis including lateral root formation as well as adventitious root formation from wounded leaf tissues. Recruited by JMJ30/ARF (e.g. ARF7 and ARF19) complexes to promote the deposition of H3K36me3 and, to a lower extent, H3K4me3 at LBD genes promoters, thus ensuring their stable activation during callus formation on callus-inducing medium (CIM). The polypeptide is Histone-lysine N-methyltransferase ATXR2 (Arabidopsis thaliana (Mouse-ear cress)).